Here is a 345-residue protein sequence, read N- to C-terminus: Protein RecA (345 aa).

65-72 contacts ATP; it reads GPESSGKT.

Belongs to the RecA family.

The protein localises to the cytoplasm. Functionally, can catalyze the hydrolysis of ATP in the presence of single-stranded DNA, the ATP-dependent uptake of single-stranded DNA by duplex DNA, and the ATP-dependent hybridization of homologous single-stranded DNAs. It interacts with LexA causing its activation and leading to its autocatalytic cleavage. The polypeptide is Protein RecA (Colwellia psychrerythraea (strain 34H / ATCC BAA-681) (Vibrio psychroerythus)).